We begin with the raw amino-acid sequence, 440 residues long: MRNKMIYFNFHLFVIIFANLQIFQVQAANIFCYYDTQRITDVNAAINYLEPALQFCNFLIYGYAGIDGETYQVKSLDYGLNYDIYQAITSLKLKHNRLKVLLSIGGDRDQTEDLAEDNKYLKLLENLSSRNAFINSIQSVIRTYGFDGLDMAWQFPKNPPKHEHSGFRKYLDKLMNLFRRSPVIDENSAFHKEQFVSLLTELRQSLNPMGAIMTMTVLPHVSAELFLDVKPIVNHVDFIILATFDYLTPYRDPTIAHYTAPIYAVSEHDPSHNINYDVQYWLNHTTATSKLVLGVPAYGRSWTMIKKSGITGHPPITAGGPGRAGHRTLTAGLLSWPEICVKIHQNKELEGDAARFRKVSDPTKRFGTYAYRSVDENNEYGIWVSYEEPKTAANKAEYAHARNLSGVALFDLSMDDVTGECGDGTYSILKSIHNAFKKFK.

A signal peptide spans M1 to A27. In terms of domain architecture, GH18 spans A28–F439. C32 and C56 are disulfide-bonded. N126, N283, and N403 each carry an N-linked (GlcNAc...) asparagine glycan. C340 and C421 form a disulfide bridge.

It belongs to the glycosyl hydrolase 18 family. IDGF subfamily. In terms of processing, glycosylated.

It localises to the secreted. Cooperates with insulin-like peptides to stimulate the proliferation, polarization and motility of imaginal disk cells. May act by stabilizing the binding of insulin-like peptides to its receptor through a simultaneous interaction with both molecules to form a multiprotein signaling complex. The protein is Chitinase-like protein Idgf5 (Idgf5) of Glossina morsitans morsitans (Savannah tsetse fly).